We begin with the raw amino-acid sequence, 505 residues long: Deoxyguanosinetriphosphate triphosphohydrolase (505 aa).

The HD domain occupies 66–273; the sequence is RLTHSMEVQQ…MEAADDISYC (208 aa).

The protein belongs to the dGTPase family. Type 1 subfamily. Homotetramer. Mg(2+) is required as a cofactor.

The catalysed reaction is dGTP + H2O = 2'-deoxyguanosine + triphosphate + H(+). Its function is as follows. dGTPase preferentially hydrolyzes dGTP over the other canonical NTPs. This chain is Deoxyguanosinetriphosphate triphosphohydrolase, found in Escherichia coli O81 (strain ED1a).